The chain runs to 198 residues: MIAIIDYGLGNVKNVQRAVQYLGYDAILTDKYNEIANADVVILPGVGHFKDAMQAINERGLANIITSITDKPVIGICLGMQLFYRWSAEGDVEGLNIFPGNIIPIQSPYPVPHLGWNNLISKHPLLLHDVYFVHAYQAEMSQHVVAYTEYGTKIPAIVQYQNYIGIQFHPEKSGDDGLAILNQALKGGFQDDQTMASN.

The Glutamine amidotransferase type-1 domain occupies 1–194 (MIAIIDYGLG…LKGGFQDDQT (194 aa)). Cys77 acts as the Nucleophile in catalysis. Catalysis depends on residues His169 and Glu171.

Heterodimer of HisH and HisF.

The protein resides in the cytoplasm. The enzyme catalyses 5-[(5-phospho-1-deoxy-D-ribulos-1-ylimino)methylamino]-1-(5-phospho-beta-D-ribosyl)imidazole-4-carboxamide + L-glutamine = D-erythro-1-(imidazol-4-yl)glycerol 3-phosphate + 5-amino-1-(5-phospho-beta-D-ribosyl)imidazole-4-carboxamide + L-glutamate + H(+). The catalysed reaction is L-glutamine + H2O = L-glutamate + NH4(+). It participates in amino-acid biosynthesis; L-histidine biosynthesis; L-histidine from 5-phospho-alpha-D-ribose 1-diphosphate: step 5/9. Its function is as follows. IGPS catalyzes the conversion of PRFAR and glutamine to IGP, AICAR and glutamate. The HisH subunit catalyzes the hydrolysis of glutamine to glutamate and ammonia as part of the synthesis of IGP and AICAR. The resulting ammonia molecule is channeled to the active site of HisF. The chain is Imidazole glycerol phosphate synthase subunit HisH from Staphylococcus saprophyticus subsp. saprophyticus (strain ATCC 15305 / DSM 20229 / NCIMB 8711 / NCTC 7292 / S-41).